Consider the following 182-residue polypeptide: ATP synthase subunit b, chloroplastic (182 aa).

Residues 33–55 traverse the membrane as a helical segment; the sequence is VLNIMLLLFGLIYVLKQFLGSLL.

This sequence belongs to the ATPase B chain family. In terms of assembly, F-type ATPases have 2 components, F(1) - the catalytic core - and F(0) - the membrane proton channel. F(1) has five subunits: alpha(3), beta(3), gamma(1), delta(1), epsilon(1). F(0) has four main subunits: a(1), b(1), b'(1) and c(10-14). The alpha and beta chains form an alternating ring which encloses part of the gamma chain. F(1) is attached to F(0) by a central stalk formed by the gamma and epsilon chains, while a peripheral stalk is formed by the delta, b and b' chains.

It is found in the plastid. Its subcellular location is the chloroplast thylakoid membrane. F(1)F(0) ATP synthase produces ATP from ADP in the presence of a proton or sodium gradient. F-type ATPases consist of two structural domains, F(1) containing the extramembraneous catalytic core and F(0) containing the membrane proton channel, linked together by a central stalk and a peripheral stalk. During catalysis, ATP synthesis in the catalytic domain of F(1) is coupled via a rotary mechanism of the central stalk subunits to proton translocation. Functionally, component of the F(0) channel, it forms part of the peripheral stalk, linking F(1) to F(0). This Antithamnion sp. (Red alga) protein is ATP synthase subunit b, chloroplastic.